A 460-amino-acid chain; its full sequence is Benzyl alcohol O-benzoyltransferase (460 aa).

Residues His-167 and Asp-382 each act as proton acceptor in the active site.

The protein belongs to the plant acyltransferase family. As to expression, specifically expressed in flowers, mainly in the limb of flowers corollas, and, at low levels, in roots, stems, sepals and leaves.

It carries out the reaction benzyl alcohol + benzoyl-CoA = benzyl benzoate + CoA. It catalyses the reaction benzyl alcohol + acetyl-CoA = benzyl acetate + CoA. The enzyme catalyses 3-hydroxybenzyl alcohol + acetyl-CoA = 3-hydroxy-benzyl acetate + CoA. The catalysed reaction is 3-hydroxybenzyl alcohol + benzoyl-CoA = 3-hydroxy-benzyl benzoate + CoA. It carries out the reaction 2-phenylethanol + benzoyl-CoA = phenethyl benzoate + CoA. It catalyses the reaction (3Z)-hex-3-en-1-ol + benzoyl-CoA = (3Z)-hex-3-en-1-yl benzoate + CoA. The enzyme catalyses (2E)-geraniol + acetyl-CoA = (2E)-geranyl acetate + CoA. The catalysed reaction is butan-1-ol + benzoyl-CoA = butyl benzoate + CoA. It carries out the reaction (2E)-geraniol + benzoyl-CoA = (2E)-geranyl benzoate + CoA. It catalyses the reaction octan-1-ol + benzoyl-CoA = octyl benzoate + CoA. It functions in the pathway aromatic compound metabolism; benzoyl-CoA degradation. Involved in the production of volatile organic compounds (VOCs), including floral volatile benzenoids and phenylpropanoids (FVBP), in flowers of fragrant cultivars (e.g. cv. Mitchell and cv. V26), scent attracting pollinators (e.g. the night-active hawkmoth pollinator Manduca sexta). Acyltransferase that catalyzes the transfer of benzoyl and acetyl moieties to a large variety of potential substrate alcohols, and involved in the formation of volatile esters benzyl benzoate and phenylethyl benzoate from benzoyl-CoA. With acetyl-CoA, mainly active on benzyl alcohol, and, to a lower extent, on 3-hydroxybenzyl alcohol, geraniol, and 2-phenylethanol, but barely active on butanol, 1-octanol, 4-hydroxy-benzyl alcohol, 2-hexanol, cis-3-hexen-1-ol and linalool. With benzoyl-CoA, mainly active on benzyl alcohol, but also efficient on several substrates, including 3-hydroxybenzyl alcohol, 2-phenylethanol, geraniol, butanol, cis-3-hexen-1-ol and 1-octanol. This chain is Benzyl alcohol O-benzoyltransferase, found in Petunia hybrida (Petunia).